Reading from the N-terminus, the 187-residue chain is Orotate phosphoribosyltransferase (187 aa).

Residues Arg103, Lys104, Lys107, and Glu129–Ser137 contribute to the 5-phospho-alpha-D-ribose 1-diphosphate site. Residues Thr133 and Arg161 each contribute to the orotate site.

This sequence belongs to the purine/pyrimidine phosphoribosyltransferase family. PyrE subfamily. As to quaternary structure, homodimer. Requires Mg(2+) as cofactor.

It carries out the reaction orotidine 5'-phosphate + diphosphate = orotate + 5-phospho-alpha-D-ribose 1-diphosphate. It functions in the pathway pyrimidine metabolism; UMP biosynthesis via de novo pathway; UMP from orotate: step 1/2. In terms of biological role, catalyzes the transfer of a ribosyl phosphate group from 5-phosphoribose 1-diphosphate to orotate, leading to the formation of orotidine monophosphate (OMP). This is Orotate phosphoribosyltransferase from Methanosarcina mazei (strain ATCC BAA-159 / DSM 3647 / Goe1 / Go1 / JCM 11833 / OCM 88) (Methanosarcina frisia).